Consider the following 264-residue polypeptide: S-adenosylmethionine decarboxylase proenzyme (264 aa).

Serine 111 (schiff-base intermediate with substrate; via pyruvic acid) is an active-site residue. Serine 111 carries the pyruvic acid (Ser); by autocatalysis modification. The active-site Proton acceptor; for processing activity is histidine 116. Cysteine 139 functions as the Proton donor; for catalytic activity in the catalytic mechanism.

This sequence belongs to the prokaryotic AdoMetDC family. Type 2 subfamily. Heterooctamer of four alpha and four beta chains arranged as a tetramer of alpha/beta heterodimers. Pyruvate serves as cofactor. In terms of processing, is synthesized initially as an inactive proenzyme. Formation of the active enzyme involves a self-maturation process in which the active site pyruvoyl group is generated from an internal serine residue via an autocatalytic post-translational modification. Two non-identical subunits are generated from the proenzyme in this reaction, and the pyruvate is formed at the N-terminus of the alpha chain, which is derived from the carboxyl end of the proenzyme. The post-translation cleavage follows an unusual pathway, termed non-hydrolytic serinolysis, in which the side chain hydroxyl group of the serine supplies its oxygen atom to form the C-terminus of the beta chain, while the remainder of the serine residue undergoes an oxidative deamination to produce ammonia and the pyruvoyl group blocking the N-terminus of the alpha chain.

It catalyses the reaction S-adenosyl-L-methionine + H(+) = S-adenosyl 3-(methylsulfanyl)propylamine + CO2. It functions in the pathway amine and polyamine biosynthesis; S-adenosylmethioninamine biosynthesis; S-adenosylmethioninamine from S-adenosyl-L-methionine: step 1/1. Catalyzes the decarboxylation of S-adenosylmethionine to S-adenosylmethioninamine (dcAdoMet), the propylamine donor required for the synthesis of the polyamines spermine and spermidine from the diamine putrescine. The chain is S-adenosylmethionine decarboxylase proenzyme from Geobacillus thermodenitrificans (strain NG80-2).